The chain runs to 134 residues: Large ribosomal subunit protein uL18 (134 aa).

Residues 1-25 form a disordered region; sequence MSNTAQNEKRLPVGKDISTRRRTAR. A compositionally biased stretch (basic and acidic residues) spans 7 to 19; that stretch reads NEKRLPVGKDIST.

Belongs to the universal ribosomal protein uL18 family. In terms of assembly, part of the 50S ribosomal subunit; part of the 5S rRNA/L5/L18/L25 subcomplex. Contacts the 5S and 23S rRNAs.

Its function is as follows. This is one of the proteins that bind and probably mediate the attachment of the 5S RNA into the large ribosomal subunit, where it forms part of the central protuberance. This chain is Large ribosomal subunit protein uL18, found in Corynebacterium jeikeium (strain K411).